Here is a 383-residue protein sequence, read N- to C-terminus: Probable protein phosphatase 2C 13 (383 aa).

Residues 78 to 349 enclose the PPM-type phosphatase domain; sequence RSGSFADIRS…DNMTVIVICF (272 aa). Mn(2+)-binding residues include Asp-121, Gly-122, Asp-297, and Asp-340.

It belongs to the PP2C family. Mg(2+) is required as a cofactor. Requires Mn(2+) as cofactor.

It catalyses the reaction O-phospho-L-seryl-[protein] + H2O = L-seryl-[protein] + phosphate. It carries out the reaction O-phospho-L-threonyl-[protein] + H2O = L-threonyl-[protein] + phosphate. The chain is Probable protein phosphatase 2C 13 from Arabidopsis thaliana (Mouse-ear cress).